Consider the following 568-residue polypeptide: Proline--tRNA ligase (568 aa).

It belongs to the class-II aminoacyl-tRNA synthetase family. ProS type 1 subfamily. As to quaternary structure, homodimer.

Its subcellular location is the cytoplasm. It catalyses the reaction tRNA(Pro) + L-proline + ATP = L-prolyl-tRNA(Pro) + AMP + diphosphate. In terms of biological role, catalyzes the attachment of proline to tRNA(Pro) in a two-step reaction: proline is first activated by ATP to form Pro-AMP and then transferred to the acceptor end of tRNA(Pro). As ProRS can inadvertently accommodate and process non-cognate amino acids such as alanine and cysteine, to avoid such errors it has two additional distinct editing activities against alanine. One activity is designated as 'pretransfer' editing and involves the tRNA(Pro)-independent hydrolysis of activated Ala-AMP. The other activity is designated 'posttransfer' editing and involves deacylation of mischarged Ala-tRNA(Pro). The misacylated Cys-tRNA(Pro) is not edited by ProRS. The chain is Proline--tRNA ligase from Chlamydia pneumoniae (Chlamydophila pneumoniae).